The following is a 250-amino-acid chain: Acyl-coenzyme A diphosphatase fit1 (250 aa).

The Cytoplasmic portion of the chain corresponds to 1-23 (MTEKTASHYWNEETSILKLRRKD). The chain crosses the membrane as a helical span at residues 24–44 (ILLFEIYATTLLLGSIYSIYV). At 45 to 58 (DKWSITSYFGNSKN) the chain is on the lumenal side. The helical transmembrane segment at 59–79 (LINLIFVKRGWFWTSLVYFYH) threads the bilayer. Over 80–95 (AWDQKRNKIDFKFISR) the chain is Cytoplasmic. A helical transmembrane segment spans residues 96–116 (YIVATLWWMFVTQWFIGPGLI). Residues 117 to 160 (DRTFALSGGSCKNFDGDSSVFIPLTASTCKGLNGSWSGGHDLSG) are Lumenal-facing. A glycan (N-linked (GlcNAc...) asparagine) is linked at asparagine 149. Histidine 161 is an active-site residue. A helical membrane pass occupies residues 161–181 (HVFLLTHSSLFMLSENFSFIL). Over 182 to 191 (NNGIKATSTK) the chain is Cytoplasmic. The helical transmembrane segment at 192–212 (VLFGLLGLWWWMLFVTASFYH) threads the bilayer. Histidine 212 is a catalytic residue. A topological domain (lumenal) is located at residue threonine 213. The chain crosses the membrane as a helical span at residues 214 to 234 (TFEKCTGFFSGILEWSIVYVF). Topologically, residues 235–250 (SSRMPAVADLLGSSDY) are cytoplasmic.

Belongs to the FIT family. Fungal FIT2B/SCS3 subfamily.

Its subcellular location is the endoplasmic reticulum membrane. The catalysed reaction is an acyl-CoA + H2O = an acyl-4'-phosphopantetheine + adenosine 3',5'-bisphosphate + 2 H(+). It carries out the reaction (9Z)-octadecenoyl-CoA + H2O = S-(9Z-octadecenoyl)-4'-phosphopantetheine + adenosine 3',5'-bisphosphate + 2 H(+). The enzyme catalyses (5Z,8Z,11Z,14Z)-eicosatetraenoyl-CoA + H2O = S-(5Z,8Z,11Z,14Z-eicosatetraenoyl)-4'-phosphopantetheine + adenosine 3',5'-bisphosphate + 2 H(+). It catalyses the reaction hexadecanoyl-CoA + H2O = S-hexadecanoyl-4'-phosphopantetheine + adenosine 3',5'-bisphosphate + 2 H(+). Fatty acyl-coenzyme A (CoA) diphosphatase that hydrolyzes fatty acyl-CoA to yield acyl-4'-phosphopantetheine and adenosine 3',5'-bisphosphate. Preferentially hydrolyzes unsaturated long-chain acyl-CoA substrates in the endoplasmic reticulum (ER) lumen. This catalytic activity is required for maintaining ER structure and for lipid droplets (LDs) biogenesis, which are lipid storage organelles involved in maintaining lipid and energy homeostasis. May directly bind to diacylglycerol (DAGs) and triacylglycerol, which is also important for LD biogenesis. May support directional budding of nacent LDs from the ER into the cytosol by reducing DAG levels at sites of LD formation. May play a role in the regulation of cell morphology and cytoskeletal organization. The sequence is that of Acyl-coenzyme A diphosphatase fit1 from Schizosaccharomyces pombe (strain 972 / ATCC 24843) (Fission yeast).